The following is a 283-amino-acid chain: Pantothenate synthetase (283 aa).

30-37 provides a ligand contact to ATP; the sequence is MGNLHLGH. His37 acts as the Proton donor in catalysis. Position 61 (Gln61) interacts with (R)-pantoate. Residue Gln61 participates in beta-alanine binding. 149-152 contributes to the ATP binding site; sequence GQKD. Gln155 contributes to the (R)-pantoate binding site. Residues Ile178 and 186–189 contribute to the ATP site; that span reads MSSR.

The protein belongs to the pantothenate synthetase family. Homodimer.

It localises to the cytoplasm. The catalysed reaction is (R)-pantoate + beta-alanine + ATP = (R)-pantothenate + AMP + diphosphate + H(+). Its pathway is cofactor biosynthesis; (R)-pantothenate biosynthesis; (R)-pantothenate from (R)-pantoate and beta-alanine: step 1/1. Its function is as follows. Catalyzes the condensation of pantoate with beta-alanine in an ATP-dependent reaction via a pantoyl-adenylate intermediate. This is Pantothenate synthetase from Shewanella pealeana (strain ATCC 700345 / ANG-SQ1).